Consider the following 365-residue polypeptide: Aminomethyltransferase (365 aa).

This sequence belongs to the GcvT family. As to quaternary structure, the glycine cleavage system is composed of four proteins: P, T, L and H.

The enzyme catalyses N(6)-[(R)-S(8)-aminomethyldihydrolipoyl]-L-lysyl-[protein] + (6S)-5,6,7,8-tetrahydrofolate = N(6)-[(R)-dihydrolipoyl]-L-lysyl-[protein] + (6R)-5,10-methylene-5,6,7,8-tetrahydrofolate + NH4(+). Functionally, the glycine cleavage system catalyzes the degradation of glycine. The polypeptide is Aminomethyltransferase (Synechococcus sp. (strain CC9902)).